Here is a 226-residue protein sequence, read N- to C-terminus: Leucyl/phenylalanyl-tRNA--protein transferase (226 aa).

This sequence belongs to the L/F-transferase family.

It is found in the cytoplasm. It catalyses the reaction N-terminal L-lysyl-[protein] + L-leucyl-tRNA(Leu) = N-terminal L-leucyl-L-lysyl-[protein] + tRNA(Leu) + H(+). The enzyme catalyses N-terminal L-arginyl-[protein] + L-leucyl-tRNA(Leu) = N-terminal L-leucyl-L-arginyl-[protein] + tRNA(Leu) + H(+). The catalysed reaction is L-phenylalanyl-tRNA(Phe) + an N-terminal L-alpha-aminoacyl-[protein] = an N-terminal L-phenylalanyl-L-alpha-aminoacyl-[protein] + tRNA(Phe). Its function is as follows. Functions in the N-end rule pathway of protein degradation where it conjugates Leu, Phe and, less efficiently, Met from aminoacyl-tRNAs to the N-termini of proteins containing an N-terminal arginine or lysine. The sequence is that of Leucyl/phenylalanyl-tRNA--protein transferase from Azotobacter vinelandii (strain DJ / ATCC BAA-1303).